We begin with the raw amino-acid sequence, 316 residues long: C1GALT1-specific chaperone 1 (316 aa).

The Cytoplasmic portion of the chain corresponds to 1–6; the sequence is MLSESS. The helical; Signal-anchor for type II membrane protein transmembrane segment at 7–26 threads the bilayer; the sequence is SFLKGVMLGSIFCALITMLG. At 27 to 316 the chain is on the lumenal side; sequence HIRIGNRMHH…FLPPNGSEND (290 aa).

This sequence belongs to the glycosyltransferase 31 family. Beta3-Gal-T subfamily. As to quaternary structure, associates with core 1 beta-3-galactosyltransferase (C1GALT1), probably not with the soluble active form.

Its subcellular location is the membrane. Functionally, probable chaperone required for the generation of 1 O-glycan Gal-beta1-3GalNAc-alpha1-Ser/Thr (T antigen), which is a precursor for many extended O-glycans in glycoproteins. Probably acts as a specific molecular chaperone assisting the folding/stability of core 1 beta-3-galactosyltransferase (C1GALT1). The chain is C1GALT1-specific chaperone 1 (C1galt1c1) from Rattus norvegicus (Rat).